A 159-amino-acid polypeptide reads, in one-letter code: 2-C-methyl-D-erythritol 2,4-cyclodiphosphate synthase (159 aa).

Asp10 and His12 together coordinate a divalent metal cation. 4-CDP-2-C-methyl-D-erythritol 2-phosphate contacts are provided by residues 10–12 (DVH) and 36–37 (HS). An a divalent metal cation-binding site is contributed by His44. 4-CDP-2-C-methyl-D-erythritol 2-phosphate-binding positions include 58-60 (DIG), 134-137 (TTTE), Phe141, and Arg144.

This sequence belongs to the IspF family. Homotrimer. A divalent metal cation is required as a cofactor.

It catalyses the reaction 4-CDP-2-C-methyl-D-erythritol 2-phosphate = 2-C-methyl-D-erythritol 2,4-cyclic diphosphate + CMP. It functions in the pathway isoprenoid biosynthesis; isopentenyl diphosphate biosynthesis via DXP pathway; isopentenyl diphosphate from 1-deoxy-D-xylulose 5-phosphate: step 4/6. Functionally, involved in the biosynthesis of isopentenyl diphosphate (IPP) and dimethylallyl diphosphate (DMAPP), two major building blocks of isoprenoid compounds. Catalyzes the conversion of 4-diphosphocytidyl-2-C-methyl-D-erythritol 2-phosphate (CDP-ME2P) to 2-C-methyl-D-erythritol 2,4-cyclodiphosphate (ME-CPP) with a corresponding release of cytidine 5-monophosphate (CMP). In Bacteroides fragilis (strain ATCC 25285 / DSM 2151 / CCUG 4856 / JCM 11019 / LMG 10263 / NCTC 9343 / Onslow / VPI 2553 / EN-2), this protein is 2-C-methyl-D-erythritol 2,4-cyclodiphosphate synthase.